A 70-amino-acid chain; its full sequence is MTTIRVKENEPFDVALRRFKRTIEKLGLLTDLRAREFYEKPTAERKRKKAAAVKRHYKRVRSMQLPKKLY.

The protein belongs to the bacterial ribosomal protein bS21 family.

The polypeptide is Small ribosomal subunit protein bS21 (Paracidovorax citrulli (strain AAC00-1) (Acidovorax citrulli)).